The sequence spans 175 residues: MLTIAKDQTQVNERIRAREIRVIGQDGEQIGVKQKREALEMAERVGLDLVVVAPNAKPPVARIMDYGKYKFEQQKKEKEMKKKQKVINVKEIRLSPTIEEHDFQTKLKNGRKFLNKGDKCKVSIRFRGRAITHKEIGQRVLEKFADECKDIATVEQRPKMEGRQMFIMLAPIAEK.

The protein belongs to the IF-3 family. In terms of assembly, monomer.

The protein resides in the cytoplasm. Its function is as follows. IF-3 binds to the 30S ribosomal subunit and shifts the equilibrium between 70S ribosomes and their 50S and 30S subunits in favor of the free subunits, thus enhancing the availability of 30S subunits on which protein synthesis initiation begins. The sequence is that of Translation initiation factor IF-3 from Staphylococcus carnosus (strain TM300).